The sequence spans 66 residues: Large ribosomal subunit protein bL33c (66 aa).

It belongs to the bacterial ribosomal protein bL33 family.

The protein localises to the plastid. It localises to the chloroplast. The sequence is that of Large ribosomal subunit protein bL33c from Nasturtium officinale (Watercress).